A 1106-amino-acid chain; its full sequence is Platelet-derived growth factor receptor beta (1106 aa).

An N-terminal signal peptide occupies residues 1–32; sequence MRLPGAMPALALKGELLLLSLLLLLEPQISQG. Ig-like C2-type domains lie at 33-120, 129-210, 214-309, 331-403, and 416-524; these read LVVT…YIFV, PNDA…YRLQ, INVS…INIT, HRSR…HEDA, and PVRV…VIVV. Over 33-532 the chain is Extracellular; sequence LVVTPPGPEL…VVPHSLPFKV (500 aa). N-linked (GlcNAc...) asparagine glycans are attached at residues Asn-45, Asn-89, and Asn-103. Cys-54 and Cys-100 are disulfide-bonded. A disulfide bridge connects residues Cys-149 and Cys-190. N-linked (GlcNAc...) asparagine glycosylation is found at Asn-215 and Asn-230. An intrachain disulfide couples Cys-235 to Cys-291. 6 N-linked (GlcNAc...) asparagine glycosylation sites follow: Asn-292, Asn-307, Asn-354, Asn-371, Asn-468, and Asn-479. The cysteines at positions 436 and 508 are disulfide-linked. A helical membrane pass occupies residues 533 to 553; the sequence is VVISAILALVVLTIISLIILI. Topologically, residues 554 to 1106 are cytoplasmic; that stretch reads MLWQKKPRYE…PRAEAEDSFL (553 aa). Residues Tyr-562, Tyr-579, and Tyr-581 each carry the phosphotyrosine; by autocatalysis modification. One can recognise a Protein kinase domain in the interval 600–962; the sequence is LVLGRTLGSG…QLVLLLERLL (363 aa). ATP-binding positions include 606-614 and Lys-634; that span reads LGSGAFGQV. Residue Tyr-686 is modified to Phosphotyrosine; by ABL1 and ABL2. A phosphotyrosine; by autocatalysis mark is found at Tyr-716, Tyr-740, Tyr-751, Tyr-763, Tyr-771, Tyr-775, and Tyr-778. Asp-826 (proton acceptor) is an active-site residue. Tyr-857 carries the phosphotyrosine; by autocatalysis modification. Tyr-934 and Tyr-970 each carry phosphotyrosine; by ABL1 and ABL2. Phosphotyrosine; by autocatalysis occurs at positions 1009 and 1021. Residues 1019–1106 are disordered; it reads NDYIIPLPDP…PRAEAEDSFL (88 aa). Polar residues predominate over residues 1043 to 1060; that stretch reads SLASSTLNEVNTSSTISC. Positions 1066-1088 are enriched in acidic residues; that stretch reads PQDEPEPEPQLELQVEPEPELEQ.

The protein belongs to the protein kinase superfamily. Tyr protein kinase family. CSF-1/PDGF receptor subfamily. In terms of assembly, interacts with homodimeric PDGFB and PDGFD, and with heterodimers formed by PDGFA and PDGFB. May also interact with homodimeric PDGFC. Monomer in the absence of bound ligand. Interaction with homodimeric PDGFB, heterodimers formed by PDGFA and PDGFB or homodimeric PDGFD, leads to receptor dimerization, where both PDGFRA homodimers and heterodimers with PDGFRB are observed. Interacts with SH2B2/APS. Interacts directly (tyrosine phosphorylated) with SHB. Interacts (tyrosine phosphorylated) with PIK3R1 and RASA1. Interacts (tyrosine phosphorylated) with CBL. Interacts (tyrosine phosphorylated) with SRC and SRC family kinases. Interacts (tyrosine phosphorylated) with PIK3C2B, maybe indirectly. Interacts (tyrosine phosphorylated) with SHC1, GRB7, GRB10 and NCK1. Interaction with GRB2 is mediated by SHC1. Interacts (via C-terminus) with NHERF1. In terms of processing, autophosphorylated on tyrosine residues upon ligand binding. Autophosphorylation occurs in trans, i.e. one subunit of the dimeric receptor phosphorylates tyrosine residues on the other subunit. Phosphorylation at Tyr-579, and to a lesser degree, at Tyr-581, is important for interaction with SRC family kinases. Phosphorylation at Tyr-740 and Tyr-751 is important for interaction with PIK3R1. Phosphorylation at Tyr-751 is important for interaction with NCK1. Phosphorylation at Tyr-771 and Tyr-857 is important for interaction with RASA1/GAP. Phosphorylation at Tyr-857 is important for efficient phosphorylation of PLCG1 and PTPN11, resulting in increased phosphorylation of AKT1, MAPK1/ERK2 and/or MAPK3/ERK1, PDCD6IP/ALIX and STAM, and in increased cell proliferation. Phosphorylation at Tyr-1009 is important for interaction with PTPN11. Phosphorylation at Tyr-1009 and Tyr-1021 is important for interaction with PLCG1. Phosphorylation at Tyr-1021 is important for interaction with CBL; PLCG1 and CBL compete for the same binding site. Dephosphorylated by PTPRJ at Tyr-751, Tyr-857, Tyr-1009 and Tyr-1021. Dephosphorylated by PTPN2 at Tyr-579 and Tyr-1021. Post-translationally, N-glycosylated. Ubiquitinated. After autophosphorylation, the receptor is polyubiquitinated, leading to its degradation.

It localises to the cell membrane. The protein resides in the cytoplasmic vesicle. It is found in the lysosome lumen. The catalysed reaction is L-tyrosyl-[protein] + ATP = O-phospho-L-tyrosyl-[protein] + ADP + H(+). Present in an inactive conformation in the absence of bound ligand. Binding of PDGFB and/or PDGFD leads to dimerization and activation by autophosphorylation on tyrosine residues. Inhibited by imatinib. Tyrosine-protein kinase that acts as a cell-surface receptor for homodimeric PDGFB and PDGFD and for heterodimers formed by PDGFA and PDGFB, and plays an essential role in the regulation of embryonic development, cell proliferation, survival, differentiation, chemotaxis and migration. Plays an essential role in blood vessel development by promoting proliferation, migration and recruitment of pericytes and smooth muscle cells to endothelial cells. Plays a role in the migration of vascular smooth muscle cells and the formation of neointima at vascular injury sites. Required for normal development of the cardiovascular system. Required for normal recruitment of pericytes (mesangial cells) in the kidney glomerulus, and for normal formation of a branched network of capillaries in kidney glomeruli. Promotes rearrangement of the actin cytoskeleton and the formation of membrane ruffles. Binding of its cognate ligands - homodimeric PDGFB, heterodimers formed by PDGFA and PDGFB or homodimeric PDGFD -leads to the activation of several signaling cascades; the response depends on the nature of the bound ligand and is modulated by the formation of heterodimers between PDGFRA and PDGFRB. Phosphorylates PLCG1, PIK3R1, PTPN11, RASA1/GAP, CBL, SHC1 and NCK1. Activation of PLCG1 leads to the production of the cellular signaling molecules diacylglycerol and inositol 1,4,5-trisphosphate, mobilization of cytosolic Ca(2+) and the activation of protein kinase C. Phosphorylation of PIK3R1, the regulatory subunit of phosphatidylinositol 3-kinase, leads to the activation of the AKT1 signaling pathway. Phosphorylation of SHC1, or of the C-terminus of PTPN11, creates a binding site for GRB2, resulting in the activation of HRAS, RAF1 and down-stream MAP kinases, including MAPK1/ERK2 and/or MAPK3/ERK1. Promotes phosphorylation and activation of SRC family kinases. Promotes phosphorylation of PDCD6IP/ALIX and STAM. Receptor signaling is down-regulated by protein phosphatases that dephosphorylate the receptor and its down-stream effectors, and by rapid internalization of the activated receptor. The chain is Platelet-derived growth factor receptor beta (PDGFRB) from Homo sapiens (Human).